The following is a 120-amino-acid chain: uncharacterized protein (120 aa).

The chain crosses the membrane as a helical span at residues 8–28; that stretch reads LIVKWFVGLMLIMMMVAVSLF.

The protein localises to the membrane. This is an uncharacterized protein from Bacillus anthracis.